Here is an 865-residue protein sequence, read N- to C-terminus: Leucine--tRNA ligase (865 aa).

The short motif at 58–68 is the 'HIGH' region element; that stretch reads PYPSGNLHMGH. The 'KMSKS' region signature appears at 629–633; it reads KMSKS. Lysine 632 is an ATP binding site.

It belongs to the class-I aminoacyl-tRNA synthetase family.

The protein resides in the cytoplasm. It carries out the reaction tRNA(Leu) + L-leucine + ATP = L-leucyl-tRNA(Leu) + AMP + diphosphate. The polypeptide is Leucine--tRNA ligase (Synechococcus sp. (strain ATCC 27144 / PCC 6301 / SAUG 1402/1) (Anacystis nidulans)).